Consider the following 373-residue polypeptide: Centrosomal protein of 41 kDa (373 aa).

Residues 89-137 (QRLEDNDSAASDPDAETTARTNGKGNPGEQSPSPEQFINNAGAGDSSRS) are disordered. Ser-96 and Ser-99 each carry phosphoserine. Polar residues predominate over residues 106–127 (TARTNGKGNPGEQSPSPEQFIN). Thr-109 carries the phosphothreonine modification. At Ser-121 the chain carries Phosphoserine. One can recognise a Rhodanese domain in the interval 169 to 266 (PDCPFLLLDV…LAQKFPEGLI (98 aa)). Positions 275–373 (QQALPPGSAR…SGHLQGKPWK (99 aa)) are disordered. The span at 298–312 (NKWRFTPEDLKKIEY) shows a compositional bias: basic and acidic residues. Arg-343 is modified (omega-N-methylarginine). Residues 355–366 (SHSNPRSLSSGH) are compositionally biased toward polar residues.

Belongs to the CEP41 family. As to quaternary structure, found in a complex with TTLL6. In terms of tissue distribution, expressed in testis and fetal tissues.

The protein resides in the cytoplasm. It localises to the cytoskeleton. It is found in the microtubule organizing center. The protein localises to the centrosome. Its subcellular location is the cell projection. The protein resides in the cilium. It localises to the cilium basal body. Its function is as follows. Required during ciliogenesis for tubulin glutamylation in cilium. Probably acts by participating in the transport of TTLL6, a tubulin polyglutamylase, between the basal body and the cilium. The polypeptide is Centrosomal protein of 41 kDa (CEP41) (Homo sapiens (Human)).